The following is a 288-amino-acid chain: Bifunctional protein FolD (288 aa).

NADP(+)-binding positions include 166–168 (GAS) and isoleucine 232.

The protein belongs to the tetrahydrofolate dehydrogenase/cyclohydrolase family. In terms of assembly, homodimer.

The catalysed reaction is (6R)-5,10-methylene-5,6,7,8-tetrahydrofolate + NADP(+) = (6R)-5,10-methenyltetrahydrofolate + NADPH. The enzyme catalyses (6R)-5,10-methenyltetrahydrofolate + H2O = (6R)-10-formyltetrahydrofolate + H(+). It participates in one-carbon metabolism; tetrahydrofolate interconversion. Its function is as follows. Catalyzes the oxidation of 5,10-methylenetetrahydrofolate to 5,10-methenyltetrahydrofolate and then the hydrolysis of 5,10-methenyltetrahydrofolate to 10-formyltetrahydrofolate. This is Bifunctional protein FolD from Escherichia fergusonii (strain ATCC 35469 / DSM 13698 / CCUG 18766 / IAM 14443 / JCM 21226 / LMG 7866 / NBRC 102419 / NCTC 12128 / CDC 0568-73).